Reading from the N-terminus, the 428-residue chain is Dihydroorotase (428 aa).

Residues His59 and His61 each contribute to the Zn(2+) site. Substrate-binding positions include 61–63 (HLR) and Asn93. Zn(2+) is bound by residues Asp151, His178, and His231. Asn277 provides a ligand contact to substrate. Asp304 serves as a coordination point for Zn(2+). Residue Asp304 is part of the active site. Residues His308 and 322-323 (FG) each bind substrate.

It belongs to the metallo-dependent hydrolases superfamily. DHOase family. Class I DHOase subfamily. Zn(2+) serves as cofactor.

The enzyme catalyses (S)-dihydroorotate + H2O = N-carbamoyl-L-aspartate + H(+). The protein operates within pyrimidine metabolism; UMP biosynthesis via de novo pathway; (S)-dihydroorotate from bicarbonate: step 3/3. Catalyzes the reversible cyclization of carbamoyl aspartate to dihydroorotate. The protein is Dihydroorotase of Bacillus cereus (strain ATCC 10987 / NRS 248).